A 305-amino-acid polypeptide reads, in one-letter code: tRNA dimethylallyltransferase (305 aa).

An ATP-binding site is contributed by 8-15; sequence GPTAIGKS. 10–15 is a binding site for substrate; sequence TAIGKS. Positions 33–36 are interaction with substrate tRNA; it reads DSMA.

The protein belongs to the IPP transferase family. In terms of assembly, monomer. Mg(2+) serves as cofactor.

It catalyses the reaction adenosine(37) in tRNA + dimethylallyl diphosphate = N(6)-dimethylallyladenosine(37) in tRNA + diphosphate. In terms of biological role, catalyzes the transfer of a dimethylallyl group onto the adenine at position 37 in tRNAs that read codons beginning with uridine, leading to the formation of N6-(dimethylallyl)adenosine (i(6)A). This Aquifex aeolicus (strain VF5) protein is tRNA dimethylallyltransferase.